The primary structure comprises 387 residues: Aminodeoxyfutalosine synthase (387 aa).

Residues 52-279 (VHFNVNRHLN…ARTQMATGAE (228 aa)) enclose the Radical SAM core domain. Positions 66, 70, and 73 each coordinate [4Fe-4S] cluster.

This sequence belongs to the radical SAM superfamily. MqnE family. The cofactor is [4Fe-4S] cluster.

It catalyses the reaction 3-[(1-carboxyvinyl)-oxy]benzoate + S-adenosyl-L-methionine + H2O = 6-amino-6-deoxyfutalosine + hydrogencarbonate + L-methionine + H(+). The protein operates within quinol/quinone metabolism; menaquinone biosynthesis. Radical SAM enzyme that catalyzes the addition of the adenosyl radical to the double bond of 3-[(1-carboxyvinyl)oxy]benzoate, leading to aminodeoxyfutalosine (AFL), a key intermediate in the formation of menaquinone (MK, vitamin K2) from chorismate. This Streptomyces coelicolor (strain ATCC BAA-471 / A3(2) / M145) protein is Aminodeoxyfutalosine synthase.